Consider the following 404-residue polypeptide: tRNA (carboxymethyluridine(34)-5-O)-methyltransferase (404 aa).

Ser-238 carries the phosphoserine modification.

In terms of assembly, interacts with TRM112A and TRM112B.

The enzyme catalyses 5-(carboxymethyl)uridine(34) in tRNA + S-adenosyl-L-methionine = 5-(2-methoxy-2-oxoethyl)uridine(34) in tRNA + S-adenosyl-L-homocysteine. In terms of biological role, catalyzes the methylation of 5-carboxymethyl uridine to 5-methylcarboxymethyl uridine at the wobble position of the anticodon loop in tRNA via its methyltransferase domain. Catalyzes the last step in the formation of 5-methylcarboxymethyl uridine at the wobble position of the anticodon loop in target tRNA. The sequence is that of tRNA (carboxymethyluridine(34)-5-O)-methyltransferase from Arabidopsis thaliana (Mouse-ear cress).